The sequence spans 184 residues: Large ribosomal subunit protein uL6 (184 aa).

This sequence belongs to the universal ribosomal protein uL6 family. In terms of assembly, part of the 50S ribosomal subunit.

Functionally, this protein binds to the 23S rRNA, and is important in its secondary structure. It is located near the subunit interface in the base of the L7/L12 stalk, and near the tRNA binding site of the peptidyltransferase center. In Thermotoga petrophila (strain ATCC BAA-488 / DSM 13995 / JCM 10881 / RKU-1), this protein is Large ribosomal subunit protein uL6.